A 255-amino-acid polypeptide reads, in one-letter code: Imidazole glycerol phosphate synthase subunit HisF (255 aa).

Active-site residues include D13 and D132.

Belongs to the HisA/HisF family. Heterodimer of HisH and HisF.

It is found in the cytoplasm. The enzyme catalyses 5-[(5-phospho-1-deoxy-D-ribulos-1-ylimino)methylamino]-1-(5-phospho-beta-D-ribosyl)imidazole-4-carboxamide + L-glutamine = D-erythro-1-(imidazol-4-yl)glycerol 3-phosphate + 5-amino-1-(5-phospho-beta-D-ribosyl)imidazole-4-carboxamide + L-glutamate + H(+). Its pathway is amino-acid biosynthesis; L-histidine biosynthesis; L-histidine from 5-phospho-alpha-D-ribose 1-diphosphate: step 5/9. Functionally, IGPS catalyzes the conversion of PRFAR and glutamine to IGP, AICAR and glutamate. The HisF subunit catalyzes the cyclization activity that produces IGP and AICAR from PRFAR using the ammonia provided by the HisH subunit. The protein is Imidazole glycerol phosphate synthase subunit HisF of Leptospira biflexa serovar Patoc (strain Patoc 1 / ATCC 23582 / Paris).